The chain runs to 339 residues: Peroxidase 29 (339 aa).

The N-terminal stretch at 1 to 28 is a signal peptide; sequence MKPKSKVAESTAASCFLVMSLLCSCIIG. 4 cysteine pairs are disulfide-bonded: Cys-47–Cys-127, Cys-80–Cys-85, Cys-133–Cys-335, and Cys-213–Cys-242. His-78 functions as the Proton acceptor in the catalytic mechanism. Residues Asp-79, Val-82, Gly-84, Asp-86, and Ser-88 each contribute to the Ca(2+) site. A substrate-binding site is contributed by Pro-176. Heme b is bound at residue His-206. A Ca(2+)-binding site is contributed by Thr-207. Asn-224 carries an N-linked (GlcNAc...) asparagine glycan. Positions 260, 262, and 267 each coordinate Ca(2+).

Belongs to the peroxidase family. Classical plant (class III) peroxidase subfamily. Heme b is required as a cofactor. It depends on Ca(2+) as a cofactor.

It localises to the secreted. It carries out the reaction 2 a phenolic donor + H2O2 = 2 a phenolic radical donor + 2 H2O. Its function is as follows. Removal of H(2)O(2), oxidation of toxic reductants, biosynthesis and degradation of lignin, suberization, auxin catabolism, response to environmental stresses such as wounding, pathogen attack and oxidative stress. These functions might be dependent on each isozyme/isoform in each plant tissue. This chain is Peroxidase 29 (PER29), found in Arabidopsis thaliana (Mouse-ear cress).